A 207-amino-acid polypeptide reads, in one-letter code: Guanylate kinase (207 aa).

Residues 4–184 enclose the Guanylate kinase-like domain; that stretch reads GTLYIVSAPS…ALMDFKAILR (181 aa). 11–18 is an ATP binding site; sequence APSGAGKS.

It belongs to the guanylate kinase family.

The protein resides in the cytoplasm. The enzyme catalyses GMP + ATP = GDP + ADP. Functionally, essential for recycling GMP and indirectly, cGMP. This is Guanylate kinase from Vibrio parahaemolyticus serotype O3:K6 (strain RIMD 2210633).